We begin with the raw amino-acid sequence, 397 residues long: MNKQVYMDYSATTYTKPEVLEEMLPFFTENFGNPSSLYSFSDKTKKAVNLARERVSKALNAEKNEIFFTSGGSEADNWALKGIAYANKKKGNHIITTKIEHHAILHTAQFLEKEGFKVTYLPVDEEGFVSVEDIKNAITDETILVSVMFANNEIGTIEPIKEIGELCKEKNIYFHTDAVQAIGHVDIDVKDMNIDLLSMSAHKFYGPKGVGALYIKNGVKIQNLIHGGGQERGKRASTEDTAGIVGLGKAIELAMENMPEENEKLSNLRGRLIRGIEARIPEVKLNGPKDMSRRLPNNVNFSFIGIEGETLLLDLDMNGIFGSTGSACASASLDPSHVLLSIGLPHETAHGSLRLSLGAKNTEEDIDYVLEVLPKIIKQRREMSPLWEDYMKNKEEK.

Residues 72 to 73 (GS), N152, Q180, and 200 to 202 (SAH) each bind pyridoxal 5'-phosphate. K203 bears the N6-(pyridoxal phosphate)lysine mark. T238 is a binding site for pyridoxal 5'-phosphate. Catalysis depends on C328, which acts as the Cysteine persulfide intermediate. Residue C328 coordinates [2Fe-2S] cluster.

It belongs to the class-V pyridoxal-phosphate-dependent aminotransferase family. NifS/IscS subfamily. As to quaternary structure, homodimer. Forms a heterotetramer with IscU, interacts with other sulfur acceptors. The cofactor is pyridoxal 5'-phosphate.

Its subcellular location is the cytoplasm. The enzyme catalyses (sulfur carrier)-H + L-cysteine = (sulfur carrier)-SH + L-alanine. Its pathway is cofactor biosynthesis; iron-sulfur cluster biosynthesis. In terms of biological role, master enzyme that delivers sulfur to a number of partners involved in Fe-S cluster assembly, tRNA modification or cofactor biosynthesis. Catalyzes the removal of elemental sulfur atoms from cysteine to produce alanine. Functions as a sulfur delivery protein for Fe-S cluster synthesis onto IscU, an Fe-S scaffold assembly protein, as well as other S acceptor proteins. The sequence is that of Cysteine desulfurase IscS from Clostridium botulinum (strain Kyoto / Type A2).